The sequence spans 158 residues: Transcription elongation factor GreA (158 aa).

Residues 46–66 (AEYEAAKERQGFIEGRISELE) are a coiled coil.

Belongs to the GreA/GreB family.

Its function is as follows. Necessary for efficient RNA polymerase transcription elongation past template-encoded arresting sites. The arresting sites in DNA have the property of trapping a certain fraction of elongating RNA polymerases that pass through, resulting in locked ternary complexes. Cleavage of the nascent transcript by cleavage factors such as GreA or GreB allows the resumption of elongation from the new 3'terminus. GreA releases sequences of 2 to 3 nucleotides. The chain is Transcription elongation factor GreA from Neisseria meningitidis serogroup B (strain ATCC BAA-335 / MC58).